A 79-amino-acid polypeptide reads, in one-letter code: Acyl carrier protein (79 aa).

The 76-residue stretch at 1 to 76 folds into the Carrier domain; the sequence is MSLEDDVIAI…DVFTYIKKRQ (76 aa). Ser-36 carries the O-(pantetheine 4'-phosphoryl)serine modification.

The protein belongs to the acyl carrier protein (ACP) family. 4'-phosphopantetheine is transferred from CoA to a specific serine of apo-ACP by AcpS. This modification is essential for activity because fatty acids are bound in thioester linkage to the sulfhydryl of the prosthetic group.

It is found in the cytoplasm. It participates in lipid metabolism; fatty acid biosynthesis. Carrier of the growing fatty acid chain in fatty acid biosynthesis. This chain is Acyl carrier protein, found in Chlamydia pneumoniae (Chlamydophila pneumoniae).